Reading from the N-terminus, the 153-residue chain is Transcriptional repressor NrdR (153 aa).

The segment at 3–33 (CPYCNYKESKVIDSRHTDLKSIRRRRECESC) is a zinc-finger region. The region spanning 48-138 (LMVIKKDNSR…VYRQFKDINT (91 aa)) is the ATP-cone domain.

Belongs to the NrdR family. The cofactor is Zn(2+).

In terms of biological role, negatively regulates transcription of bacterial ribonucleotide reductase nrd genes and operons by binding to NrdR-boxes. The polypeptide is Transcriptional repressor NrdR (Clostridioides difficile (strain 630) (Peptoclostridium difficile)).